Consider the following 334-residue polypeptide: Holliday junction branch migration complex subunit RuvB (334 aa).

A large ATPase domain (RuvB-L) region spans residues 1–180 (MSEFLTPERT…FGIILELDFY (180 aa)). ATP contacts are provided by residues Leu-19, Arg-20, Gly-61, Lys-64, Thr-65, Thr-66, 127–129 (EDF), Arg-170, Tyr-180, and Arg-217. Thr-65 is a binding site for Mg(2+). The interval 181 to 251 (TVKELKEIIK…IVLKTMEVLN (71 aa)) is small ATPAse domain (RuvB-S). The head domain (RuvB-H) stretch occupies residues 254-334 (AEGLDEFDRK…KYEVPENRLF (81 aa)). Residues Arg-309 and Arg-314 each contribute to the DNA site.

Belongs to the RuvB family. As to quaternary structure, homohexamer. Forms an RuvA(8)-RuvB(12)-Holliday junction (HJ) complex. HJ DNA is sandwiched between 2 RuvA tetramers; dsDNA enters through RuvA and exits via RuvB. An RuvB hexamer assembles on each DNA strand where it exits the tetramer. Each RuvB hexamer is contacted by two RuvA subunits (via domain III) on 2 adjacent RuvB subunits; this complex drives branch migration. In the full resolvosome a probable DNA-RuvA(4)-RuvB(12)-RuvC(2) complex forms which resolves the HJ.

It is found in the cytoplasm. It carries out the reaction ATP + H2O = ADP + phosphate + H(+). In terms of biological role, the RuvA-RuvB-RuvC complex processes Holliday junction (HJ) DNA during genetic recombination and DNA repair, while the RuvA-RuvB complex plays an important role in the rescue of blocked DNA replication forks via replication fork reversal (RFR). RuvA specifically binds to HJ cruciform DNA, conferring on it an open structure. The RuvB hexamer acts as an ATP-dependent pump, pulling dsDNA into and through the RuvAB complex. RuvB forms 2 homohexamers on either side of HJ DNA bound by 1 or 2 RuvA tetramers; 4 subunits per hexamer contact DNA at a time. Coordinated motions by a converter formed by DNA-disengaged RuvB subunits stimulates ATP hydrolysis and nucleotide exchange. Immobilization of the converter enables RuvB to convert the ATP-contained energy into a lever motion, pulling 2 nucleotides of DNA out of the RuvA tetramer per ATP hydrolyzed, thus driving DNA branch migration. The RuvB motors rotate together with the DNA substrate, which together with the progressing nucleotide cycle form the mechanistic basis for DNA recombination by continuous HJ branch migration. Branch migration allows RuvC to scan DNA until it finds its consensus sequence, where it cleaves and resolves cruciform DNA. This Thermotoga petrophila (strain ATCC BAA-488 / DSM 13995 / JCM 10881 / RKU-1) protein is Holliday junction branch migration complex subunit RuvB.